The sequence spans 495 residues: MVTKTSFLSFEISELVKKNVGYITQIIGPVLDVASSPGKMPNIYNSLIIKGQNPAGQEINVTCEVQQLLGNNEVRAVAMSATDGLTRGMGAVDTGAPLSVPVGETTLGRISNVLGEPVDNLGPVQSSTTFPIHRSAPAFIQLDTKLSIFETGIKVVDLLAPYRRGGKIGLFGGAGVGKTVLIMELINNIAKAHGGVSVSGGVGERTREGNDPYMEMKESKVINEENISESKVALVYGQMNEPPGARMRVGSTASTMAEYFRDVNKQDVLPFIDNILRFVQAGSEVSALLGRMPSAVGYQPTLGTEMGSSQERITSTKDGSITSIQAVYVPADDLTDPAPATTSAHLDATTVLSRGLAAKGIYPAVDPLDSTSTMSQPWIVGEEHYETAQGVKQTSQRYKELQDIIAILGLDELSEEDRQTVARARKIERFSSQPSFVAEVFTGSPGKYVSLSETIKGFQMILPGELDNLPEQAFYLVGNIDEATAKAAALQVEGQ.

An ATP-binding site is contributed by 172 to 179; that stretch reads GGAGVGKT.

This sequence belongs to the ATPase alpha/beta chains family. In terms of assembly, F-type ATPases have 2 components, CF(1) - the catalytic core - and CF(0) - the membrane proton channel. CF(1) has five subunits: alpha(3), beta(3), gamma(1), delta(1), epsilon(1). CF(0) has four main subunits: a(1), b(1), b'(1) and c(9-12).

It localises to the plastid. The protein localises to the chloroplast thylakoid membrane. The catalysed reaction is ATP + H2O + 4 H(+)(in) = ADP + phosphate + 5 H(+)(out). Functionally, produces ATP from ADP in the presence of a proton gradient across the membrane. The catalytic sites are hosted primarily by the beta subunits. This chain is ATP synthase subunit beta, chloroplastic, found in Pteridium aquilinum (Bracken fern).